The following is a 467-amino-acid chain: Gustatory and odorant receptor 22 (467 aa).

At 1–106 (MIHTQMEDAQ…MPRTTFTWCS (106 aa)) the chain is on the cytoplasmic side. The chain crosses the membrane as a helical span at residues 107-127 (KAFLWAYFIYACETVIVLVVA). Residues 128–144 (RERINKFISTSDKRFDE) are Extracellular-facing. Residues 145 to 165 (VIYNIIFMSIMVPHFLLPVAS) form a helical membrane-spanning segment. Topologically, residues 166–198 (WRNGSEVAKFKNMWTDFQYKYLIVTGKPIVFPK) are cytoplasmic. The chain crosses the membrane as a helical span at residues 199 to 219 (LYPITWTLCIVSWSLSLVIIL). Residues 220 to 238 (SQYYLQPDFQFCHTFAYYH) lie on the Extracellular side of the membrane. Residues 239-259 (IIAMLNGFCSLWFVNCTAFGT) traverse the membrane as a helical segment. The Cytoplasmic segment spans residues 260–304 (ASKAFAKELTDVLATERPAAKLTEYRHLWVDLSHMMQQLGKAYSN). A helical transmembrane segment spans residues 305 to 325 (MYGIYCLVIFFTTIIATYGSL). Residues 326–337 (SEIIEHGATYKE) are Extracellular-facing. Residues 338–358 (VGLFVIVFYCMSLLFIICNEA) form a helical membrane-spanning segment. The Cytoplasmic segment spans residues 359 to 414 (HHASKRVGLNFQERLLNVNLTAVDKATQKEVEMFLVAIDKNPPTMNLDGYANINRG). The helical transmembrane segment at 415–435 (LITSNISFMATYLVVLMQFKL) threads the bilayer. Over 436-467 (TLLRQSAKNAFISALKANLSRIRSLDADKVNT) the chain is Extracellular. An N-linked (GlcNAc...) asparagine glycan is attached at Asn453.

It belongs to the insect chemoreceptor superfamily. Gustatory receptor (GR) family. Gr21a subfamily. In terms of tissue distribution, carbon dioxide-responsive neurons coexpress GPRgr22 and GPRgr24 in the maxillary palp at both larval and adult life stages.

Its subcellular location is the cell membrane. Gustatory receptor which mediates acceptance or avoidance behavior, depending on its substrates. GPRgr22 and GPRgr24 together are sufficient for olfactory carbon dioxide-chemosensation. This is Gustatory and odorant receptor 22 from Anopheles gambiae (African malaria mosquito).